The chain runs to 723 residues: Nuclear intron maturase 3, mitochondrial (723 aa).

Residues 1-26 (MVLRLRVHSFYNRGISFLVSSSLRNL) constitute a mitochondrion transit peptide. The intron maturase type-2; degenerate stretch occupies residues 532-597 (VSAPEELVRK…HYTKDLRVSD (66 aa)). A THAP-type zinc finger spans residues 646–700 (CAASFCERSDTIMHRVHLLQNRLHINPLDEEKWVPGMGTIHSALNRKCLPLCSTH).

The protein belongs to the plant nuclear intron maturase (nMat) family.

It is found in the mitochondrion. Its function is as follows. Nuclear-encoded maturase required for splicing of group-II introns in mitochondria. Necessary for mitochondrial biogenesis during early developmental stages. The chain is Nuclear intron maturase 3, mitochondrial from Arabidopsis thaliana (Mouse-ear cress).